A 413-amino-acid chain; its full sequence is Serine protease inhibitor A3L (413 aa).

An N-terminal signal peptide occupies residues 1 to 28 (MAFIAALGLLMAGICPAVLCDGTLGRDT). At serine 30 the chain carries Phosphoserine. N-linked (GlcNAc...) asparagine glycans are attached at residues asparagine 102, asparagine 182, asparagine 220, and asparagine 267. The tract at residues 365 to 389 (GTEATAATGVATVIRRQPRTLNFNR) is RCL.

This sequence belongs to the serpin family. N-glycosylated. Liver.

The protein resides in the secreted. In Rattus norvegicus (Rat), this protein is Serine protease inhibitor A3L (Serpina3l).